Here is a 560-residue protein sequence, read N- to C-terminus: Mitogen-activated protein kinase kinase kinase 3 (560 aa).

The tract at residues 70–91 (KRQSSSSSDNTSDKEEVETEET) is disordered. The region spanning 303–557 (WLKGQLLGRG…AAELLHHPFV (255 aa)) is the Protein kinase domain. ATP is bound by residues 309–317 (LGRGSYASV) and Lys331. The active-site Proton acceptor is the Asp426.

The protein belongs to the protein kinase superfamily. STE Ser/Thr protein kinase family. MAP kinase kinase kinase subfamily. In terms of tissue distribution, expressed at low levels in roots, stems, siliques, leaves, seedlings and flower buds.

The enzyme catalyses L-seryl-[protein] + ATP = O-phospho-L-seryl-[protein] + ADP + H(+). The catalysed reaction is L-threonyl-[protein] + ATP = O-phospho-L-threonyl-[protein] + ADP + H(+). The sequence is that of Mitogen-activated protein kinase kinase kinase 3 from Arabidopsis thaliana (Mouse-ear cress).